The sequence spans 325 residues: MNLNKHSERKFDLITVGRACIDLNAVEYNRPMEETMTFSKYVGGSPANIAIGTAKLGLKVGFIGKISADQHGRFIEKYMRDLSINTDGMVKDTEGRKVGLAFTEIKSPDECSILMYRENVADLYLTPEEISEDYIKEARVLLISGTALAQSPSREAVLKAVSLARKNDVAVAFELDYRPYTWTNTEETAVYYSLVAEQADVIIGTRDEFDMMENQVGGKNEATKAHLFQHQAEIVVIKHGVEGSFAYTKAGETFQAKAYKTKVLKTFGAGDSYASAFLYGLFSGESIETALKYGSAAASIVVSKHSSSDAMPTADEIKALIAQAE.

Belongs to the carbohydrate kinase PfkB family.

It carries out the reaction 5-dehydro-2-deoxy-D-gluconate + ATP = 6-phospho-5-dehydro-2-deoxy-D-gluconate + ADP + H(+). It functions in the pathway polyol metabolism; myo-inositol degradation into acetyl-CoA; acetyl-CoA from myo-inositol: step 5/7. In terms of biological role, catalyzes the phosphorylation of 5-dehydro-2-deoxy-D-gluconate (2-deoxy-5-keto-D-gluconate or DKG) to 6-phospho-5-dehydro-2-deoxy-D-gluconate (DKGP). In Listeria monocytogenes serotype 4b (strain CLIP80459), this protein is 5-dehydro-2-deoxygluconokinase.